The following is a 557-amino-acid chain: Prosaposin (557 aa).

A signal peptide spans 1–16; it reads MYALALFASLLATALT. The propeptide occupies 17 to 59; that stretch reads SPVQDPKTCSGGSAVLCRDVKTAVDCGAVKHCQQMVWSKPTAK. The Saposin A-type 1 domain occupies 18–58; that stretch reads PVQDPKTCSGGSAVLCRDVKTAVDCGAVKHCQQMVWSKPTA. Saposin B-type domains lie at 59–142, 193–277, 313–394, and 438–519; these read KSLP…QSLQ, NEDV…NEVK, NVIL…AARP, and NGGF…PSAY. 3 disulfide bridges follow: Cys63–Cys138, Cys66–Cys132, and Cys94–Cys106. The N-linked (GlcNAc...) asparagine glycan is linked to Asn80. The propeptide occupies 143–193; it reads EYLAEQNQKQLESNKIPEVDMARVVAPFMSNIPLLLYPQDHPRSQPQPKAN. 3 disulfide bridges follow: Cys197–Cys273, Cys200–Cys267, and Cys229–Cys240. N-linked (GlcNAc...) asparagine glycosylation occurs at Asn214. The propeptide occupies 277–312; sequence KRVPMKTLVPATETIKNILPALEMMDPYEQNLVQAH. 3 cysteine pairs are disulfide-bonded: Cys317–Cys390, Cys320–Cys384, and Cys348–Cys359. N-linked (GlcNAc...) asparagine glycosylation occurs at Asn334. The propeptide occupies 393–437; that stretch reads RPELVEALEQPAPAIVSALLKEPTPPKQPAQPKQSALPAHVPPQK. Cystine bridges form between Cys442-Cys515, Cys445-Cys509, and Cys473-Cys484. N-linked (GlcNAc...) asparagine glycosylation occurs at Asn459. The propeptide occupies 520-557; the sequence is KLLLGTEKCVWGPSYWCQNMETAARCNAVDHCKRHVWN. The region spanning 521–557 is the Saposin A-type 2 domain; that stretch reads LLLGTEKCVWGPSYWCQNMETAARCNAVDHCKRHVWN.

In terms of assembly, saposin-B is a homodimer. Prosaposin exists as a roughly half-half mixture of monomers and disulfide-linked dimers. Monomeric prosaposin interacts (via C-terminus) with sortilin/SORT1, the interaction is required for targeting to lysosomes. Interacts with GRN; facilitates lysosomal delivery of progranulin from the extracellular space and the biosynthetic pathway.

The protein resides in the secreted. It is found in the lysosome. In terms of biological role, behaves as a myelinotrophic and neurotrophic factor, these effects are mediated by its G-protein-coupled receptors, GPR37 and GPR37L1, undergoing ligand-mediated internalization followed by ERK phosphorylation signaling. Its function is as follows. Saposin-A and saposin-C stimulate the hydrolysis of glucosylceramide by beta-glucosylceramidase (EC 3.2.1.45) and galactosylceramide by beta-galactosylceramidase (EC 3.2.1.46). Saposin-C apparently acts by combining with the enzyme and acidic lipid to form an activated complex, rather than by solubilizing the substrate. Saposin-B stimulates the hydrolysis of galacto-cerebroside sulfate by arylsulfatase A (EC 3.1.6.8), GM1 gangliosides by beta-galactosidase (EC 3.2.1.23) and globotriaosylceramide by alpha-galactosidase A (EC 3.2.1.22). Saposin-B forms a solubilizing complex with the substrates of the sphingolipid hydrolases. Functionally, saposin-D is a specific sphingomyelin phosphodiesterase activator (EC 3.1.4.12). In terms of biological role, saposins are specific low-molecular mass non-enzymatic proteins, they participate in the lysosomal degradation of sphingolipids, which takes place by the sequential action of specific hydrolases. The polypeptide is Prosaposin (Psap) (Mus musculus (Mouse)).